We begin with the raw amino-acid sequence, 44 residues long: Photosystem I reaction center subunit IX (44 aa).

A helical membrane pass occupies residues 7–27; the sequence is YLSVAPVLSTLWFGALAGLLI.

The protein belongs to the PsaJ family.

The protein localises to the plastid. It is found in the chloroplast thylakoid membrane. May help in the organization of the PsaE and PsaF subunits. The sequence is that of Photosystem I reaction center subunit IX from Solanum bulbocastanum (Wild potato).